The primary structure comprises 304 residues: MMGFLNLYKPKGVTSHDVVDEVRRKLNIRRVGHAGTLDPFAEGVLVVGVGSTTRLLEYLQVERKRYYVKALLGVITETFDITGEIVEERECNIPDERIIDVVKSFVGKYKQVPPAYSAKKYKGERLYKLAREGKIISLPPVDVEIYGIDKIIVKKPHFSFEVEVSKGTYIRSLCMDIGYKLGCGATAKELKRLSVGTFDIRDAINPFEVGREKLLESLIDVQKVLPLPKVEIYKDFVENIYNGNQPTLDFVKEMVDSFSKDDDVMLICNGQLVAIAKAERNSKFLEKNLPRGRIFKLKKVFKEI.

Residue Asp-38 is the Nucleophile of the active site. In terms of domain architecture, PUA spans 227–302 (LPKVEIYKDF…RIFKLKKVFK (76 aa)).

Belongs to the pseudouridine synthase TruB family. Type 1 subfamily.

It carries out the reaction uridine(55) in tRNA = pseudouridine(55) in tRNA. Responsible for synthesis of pseudouridine from uracil-55 in the psi GC loop of transfer RNAs. The chain is tRNA pseudouridine synthase B from Thermosipho melanesiensis (strain DSM 12029 / CIP 104789 / BI429).